A 448-amino-acid polypeptide reads, in one-letter code: Probable D-serine dehydratase (448 aa).

Residue Lys119 is modified to N6-(pyridoxal phosphate)lysine.

This sequence belongs to the serine/threonine dehydratase family. DsdA subfamily. Pyridoxal 5'-phosphate is required as a cofactor.

The enzyme catalyses D-serine = pyruvate + NH4(+). The chain is Probable D-serine dehydratase from Pseudomonas paraeruginosa (strain DSM 24068 / PA7) (Pseudomonas aeruginosa (strain PA7)).